Consider the following 401-residue polypeptide: Probable cysteine desulfurase (401 aa).

An N6-(pyridoxal phosphate)lysine modification is found at lysine 223.

The protein belongs to the class-V pyridoxal-phosphate-dependent aminotransferase family. Csd subfamily. It depends on pyridoxal 5'-phosphate as a cofactor.

The enzyme catalyses (sulfur carrier)-H + L-cysteine = (sulfur carrier)-SH + L-alanine. Functionally, catalyzes the removal of elemental sulfur and selenium atoms from L-cysteine, L-cystine, L-selenocysteine, and L-selenocystine to produce L-alanine. The protein is Probable cysteine desulfurase (csd) of Pseudomonas aeruginosa (strain ATCC 15692 / DSM 22644 / CIP 104116 / JCM 14847 / LMG 12228 / 1C / PRS 101 / PAO1).